Consider the following 272-residue polypeptide: MARLAAFDMDGTLLMPNHHLGHETLATLARLRERDITLTFATGRHVLEMRHILGAISMDAFLITGNGTRIHSQEGDMLHRQDLDPAIADRVLHQAWDTRASMHVFNDNGWFTGSAIPALLQAHVYSGFHYQIVDVKRIPAHQVTKICFCGDHDDLIRLRIQLNEALGERANLCFSAVDCLEVLPLGCNKGSALAVLSDHLGLSLTECMAFGDAMNDREMLESVGRGLIMGNAMPQLIAELPHLSVIGHCRNQAVSHFLTHWLDNPHLPYSPE.

The Nucleophile role is filled by D8. Mg(2+) is bound by residues D8, D10, and D212.

It belongs to the HAD-like hydrolase superfamily. Cof family. Mg(2+) serves as cofactor.

It catalyses the reaction 4-amino-2-methyl-5-(diphosphooxymethyl)pyrimidine + H2O = 4-amino-2-methyl-5-(phosphooxymethyl)pyrimidine + phosphate + H(+). In terms of biological role, catalyzes the hydrolysis of 4-amino-2-methyl-5-hydroxymethylpyrimidine pyrophosphate (HMP-PP) to 4-amino-2-methyl-5-hydroxymethylpyrimidine phosphate (HMP-P). In Citrobacter koseri (strain ATCC BAA-895 / CDC 4225-83 / SGSC4696), this protein is HMP-PP phosphatase.